Reading from the N-terminus, the 271-residue chain is Membrane protein insertase YidC 1 (271 aa).

A signal peptide spans Met-1–Ala-20. The N-palmitoyl cysteine moiety is linked to residue Cys-21. Residue Cys-21 is the site of S-diacylglycerol cysteine attachment. A run of 4 helical transmembrane segments spans residues Ile-45–Ile-65, Tyr-124–Leu-144, Pro-163–Leu-183, and Val-201–Trp-221.

Belongs to the OXA1/ALB3/YidC family. Type 2 subfamily.

Its subcellular location is the cell membrane. In terms of biological role, required for the insertion and/or proper folding and/or complex formation of integral membrane proteins into the membrane. Involved in integration of membrane proteins that insert both dependently and independently of the Sec translocase complex, as well as at least some lipoproteins. This Streptococcus agalactiae serotype III (strain NEM316) protein is Membrane protein insertase YidC 1.